Consider the following 133-residue polypeptide: Small ribosomal subunit protein uS8 (133 aa).

Belongs to the universal ribosomal protein uS8 family. In terms of assembly, part of the 30S ribosomal subunit. Contacts proteins S5 and S12.

Its function is as follows. One of the primary rRNA binding proteins, it binds directly to 16S rRNA central domain where it helps coordinate assembly of the platform of the 30S subunit. This is Small ribosomal subunit protein uS8 from Protochlamydia amoebophila (strain UWE25).